Consider the following 278-residue polypeptide: Ras-related protein Rab-40B (278 aa).

The GTP site is built by S23, G26, and K27. The interval 41-49 is switch-I; sequence SPYGHPAGI. Residue D69 coordinates Mg(2+). GTP is bound by residues G72, N126, and R127. The segment at 72–88 is switch-II; sequence GQGRFCTIFRSYSRGAQ. One can recognise an SOCS box domain in the interval 175–228; that stretch reads LLRHGMDRLWRPSKVLSLQELCCRAVVSCTPGHLVDKLPLPVALRSHLKSFSMA. The segment at 245–278 is disordered; that stretch reads ANSSHKRNSFRKVRTIRPPQSPPRNCARNSCKIS. Residues 248–259 show a composition bias toward basic residues; the sequence is SHKRNSFRKVRT. C270 carries S-palmitoyl cysteine lipidation. A lipid anchor (S-geranylgeranyl cysteine) is attached at C275.

It belongs to the small GTPase superfamily. Rab family. As to quaternary structure, component of the cullin-5-RING E3 ubiquitin-protein ligase complex (ECS(RAB40B) complex) composed of CUL5, Elongin BC (ELOB and ELOC), RNF7/RBX2 and RAB40B; RAB40B interaction with ECS complex is GTP-independent. Binds (GTP-bound) LIMA1; interaction promotes LIMA1 subcellular localization in lamellipodia during cell migration. Interacts (GTP-bound) with TKS5/SH3PXD2A (via PX domain); interaction promotes invadopodia-mediated extracellular matrix degradation. The cofactor is Mg(2+).

The protein localises to the cell membrane. It is found in the cytoplasm. Its subcellular location is the cytosol. The protein resides in the cell projection. It localises to the lamellipodium membrane. The protein localises to the ruffle. It carries out the reaction GTP + H2O = GDP + phosphate + H(+). It functions in the pathway protein modification; protein ubiquitination. With respect to regulation, regulated by guanine nucleotide exchange factors (GEFs) which promote the exchange of bound GDP for free GTP. Regulated by GTPase activating proteins (GAPs) which increase the GTP hydrolysis activity. Inhibited by GDP dissociation inhibitors (GDIs). RAB40B small GTPase acts as substrate-recognition components of the ECS(RAB40B) E3 ubiquitin ligase complex which mediates the ubiquitination of target proteins. The Rab40 subfamily belongs to the Rab family that are key regulators of intracellular membrane trafficking, from the formation of transport vesicles to their fusion with membranes. Rabs cycle between an inactive GDP-bound form and an active GTP-bound form that is able to recruit to membranes different sets of downstream effectors directly responsible for vesicle formation, movement, tethering and fusion. As part of the ECS(RAB40B) complex, GTP-bound RAB40B promotes LIMA1/EPLIN ubiquitination and degradation, thereby regulating leading-edge actin dynamics during cell migration. As part of the ECS(RAB40B) complex, GTP-bound RAB40B also ubiquitinates RAP2A GTPase which promotes its localization to lamellipodia and activation to drive cell migration. The ECS(RAB40B) complex does not mediate canonical ubiquitin-dependent degradation of RAP2. RAB40B also binds TKS5/SH3PXD2A effector independently from ECS complex to promote invadopodia-mediated extracellular matrix degradation. This is Ras-related protein Rab-40B from Mus musculus (Mouse).